The chain runs to 361 residues: MGLKGYSVGEGGGEIVEVQGGHIIRATGRKDRHSKVFTSKGPRDRRVRLSAHTAIQFYDVQDRLGYDRPSKAVDWLIKKAKTAIDKLELGETTTTTTRQEPVNTKPESPTLVFQRENNDQTQFVAANLDPEDAMKTFFPATTTTNGGGGTNINFQNYPHQDDNNMVSRTTTPPPNLSQDLGLSLHPFQGNNNTVVVPETNNFTTTHFDTFGRISGWNHHDLTMTSSSSSEHQQQEQEERSNGGFMVNHHPHHHHHQPSMMTLLNSQQQQVFLGGQQQQQQRGTLQSSLFPHSFRSWDHHQTTSDHHHHQNQASSMFASSSQYGSHGMMMMQGLSFPNTTRLLHGEEATQPNSSSSPPNSHL.

Positions arginine 29–leucine 87 constitute a TCP domain. Disordered stretches follow at residues aspartate 220–methionine 259 and serine 295–alanine 317. The span at serine 295–aspartate 304 shows a compositional bias: basic and acidic residues.

In terms of assembly, interacts with AHP1, AHP2 and AHP3. Interacts with SPL. Mostly detected in lateral organs, such as leaves and flowers. Expressed in cotyledons, particularly in the vascular region, in leaves, roots, stems, buds, flowers and immature siliques.

The protein localises to the nucleus. In terms of biological role, plays a pivotal role in the control of morphogenesis of shoot organs by negatively regulating the expression of boundary-specific genes such as CUC genes, probably through the induction of miRNA (e.g. miR164). Participates in ovule development. The protein is Transcription factor TCP10 (TCP10) of Arabidopsis thaliana (Mouse-ear cress).